The following is a 204-amino-acid chain: Large ribosomal subunit protein bL25 (204 aa).

It belongs to the bacterial ribosomal protein bL25 family. CTC subfamily. As to quaternary structure, part of the 50S ribosomal subunit; part of the 5S rRNA/L5/L18/L25 subcomplex. Contacts the 5S rRNA. Binds to the 5S rRNA independently of L5 and L18.

In terms of biological role, this is one of the proteins that binds to the 5S RNA in the ribosome where it forms part of the central protuberance. This Bordetella bronchiseptica (strain ATCC BAA-588 / NCTC 13252 / RB50) (Alcaligenes bronchisepticus) protein is Large ribosomal subunit protein bL25.